A 237-amino-acid polypeptide reads, in one-letter code: MNNHYLNQGCSFEKVSKNILKKNSHCNPWLSFFNQQDSEHQIFSLKQNDIIIFDVNSKLYIILAGCLIVKKVFRNRKKIILNVLTSEDSFGHTQFASNRFYYEVEALDVAQVLSIEYSIIMNICQNYPNFSVFLVNHLLLCSIKANHFMEIISHKSITNRLISLLLLLSEHNGISQNNGILIDLTITHKVLAQIIGSNRVSITRIISKLIHTKFISMQKKKVIIHDPILLSQRFSNR.

Positions 155 to 228 (KSITNRLISL…KKKVIIHDPI (74 aa)) constitute an HTH crp-type domain. Residues 188–207 (HKVLAQIIGSNRVSITRIIS) constitute a DNA-binding region (H-T-H motif).

It is found in the plastid. It localises to the chloroplast. This chain is Putative HTH-type transcriptional regulator ycf28 (ycf28), found in Porphyra purpurea (Red seaweed).